Consider the following 140-residue polypeptide: Nucleoside diphosphate kinase (140 aa).

ATP-binding residues include lysine 11, phenylalanine 59, arginine 87, threonine 93, arginine 104, and asparagine 114. The active-site Pros-phosphohistidine intermediate is histidine 117.

The protein belongs to the NDK family. As to quaternary structure, homotetramer. It depends on Mg(2+) as a cofactor.

It is found in the cytoplasm. It catalyses the reaction a 2'-deoxyribonucleoside 5'-diphosphate + ATP = a 2'-deoxyribonucleoside 5'-triphosphate + ADP. The enzyme catalyses a ribonucleoside 5'-diphosphate + ATP = a ribonucleoside 5'-triphosphate + ADP. In terms of biological role, major role in the synthesis of nucleoside triphosphates other than ATP. The ATP gamma phosphate is transferred to the NDP beta phosphate via a ping-pong mechanism, using a phosphorylated active-site intermediate. This Chelativorans sp. (strain BNC1) protein is Nucleoside diphosphate kinase.